A 196-amino-acid chain; its full sequence is Peptide deformylase (196 aa).

Fe cation is bound by residues cysteine 105 and histidine 147. Residue glutamate 148 is part of the active site. Histidine 151 is a Fe cation binding site.

The protein belongs to the polypeptide deformylase family. Requires Fe(2+) as cofactor.

The enzyme catalyses N-terminal N-formyl-L-methionyl-[peptide] + H2O = N-terminal L-methionyl-[peptide] + formate. Functionally, removes the formyl group from the N-terminal Met of newly synthesized proteins. Requires at least a dipeptide for an efficient rate of reaction. N-terminal L-methionine is a prerequisite for activity but the enzyme has broad specificity at other positions. The chain is Peptide deformylase from Flavobacterium johnsoniae (strain ATCC 17061 / DSM 2064 / JCM 8514 / BCRC 14874 / CCUG 350202 / NBRC 14942 / NCIMB 11054 / UW101) (Cytophaga johnsonae).